A 296-amino-acid chain; its full sequence is 4-diphosphocytidyl-2-C-methyl-D-erythritol kinase (296 aa).

The active site involves lysine 11. Position 96 to 106 (96 to 106 (PVSSGLAGGSA)) interacts with ATP. Residue aspartate 136 is part of the active site.

Belongs to the GHMP kinase family. IspE subfamily.

It carries out the reaction 4-CDP-2-C-methyl-D-erythritol + ATP = 4-CDP-2-C-methyl-D-erythritol 2-phosphate + ADP + H(+). The protein operates within isoprenoid biosynthesis; isopentenyl diphosphate biosynthesis via DXP pathway; isopentenyl diphosphate from 1-deoxy-D-xylulose 5-phosphate: step 3/6. Catalyzes the phosphorylation of the position 2 hydroxy group of 4-diphosphocytidyl-2C-methyl-D-erythritol. In Anaplasma phagocytophilum (strain HZ), this protein is 4-diphosphocytidyl-2-C-methyl-D-erythritol kinase.